The sequence spans 215 residues: Nucleoredoxin-like protein 1 (215 aa).

A Thioredoxin; atypical domain is found at methionine 1–leucine 165. Basic and acidic residues predominate over residues isoleucine 185–glutamate 194. The disordered stretch occupies residues isoleucine 185–phenylalanine 215.

Belongs to the nucleoredoxin family.

The protein localises to the cell projection. The protein resides in the cilium. Its subcellular location is the photoreceptor outer segment. In terms of biological role, plays an important role in retinal cone photoreceptor survival. May play a role in cone cell viability, slowing down cone degeneration, does not seem to play a role in degenerating rods. The polypeptide is Nucleoredoxin-like protein 1 (nxnl1) (Xenopus laevis (African clawed frog)).